A 780-amino-acid polypeptide reads, in one-letter code: METPPEMPSTDGHTRAIVTERYVVESKKSAAHVPLACSTQHCAFPLDGSRLCVWSSKDPSHQLLTLQGHHQLITAVVFGNQIDPLLLCSASEDYIIMWNVAECREKTLKGLTPRGTILGSLLQTVLCLRFSLDDRAIAVCAGNKISVMDVEKQSVLVELKGHQGSVTAVEFCPWQAHTLISVSEDRSFKVWDFCVGSLIYSSSILTAYPLLNLLINEENQQLVTGSADGQLWIFSLMEGHHYHCVAHVDVRKKRETFTTRRMMAEQCSLPEDHQCRCRHEADKRGEAEATFPILSLAPCDLCLPDSQRGAFASECTKCLWIGSSTALFILNLASFELEAALHFKEFQSLSVQVAGSCAMVSEPMSAKAFCMLSSMFGSKIAVLEIDLAALLSTQQYPRAGKVLSVLASSCVLPTSPLYFGIIKEKFPKLANTKQHAVKSVVEDRPLVFHTKVRSSGYTLAPHMAMFSPKTNIKHHNKRSSKYKNNYKCKECSLENFLPRNLSRQVAVAQKPVAVSCLQFSGDGQKLACGLGNHLSLVFNASLSGPPAAFSGHDGAVSTICWSHDKRWLLSTGRDRTLRVWSVHRTELMLLLAPDAFPKPVTSAQFYYMDTFILLSSGPEFCLLKYHIDLCRDDIRRYKPKSRYKPIFRLPMTSGADITSLSAVNDFYSHIVLTAGRDRAVEVFDLNAGCSAAVLAEVHSRPVHRICQNKGSSFVAQHSLAYNLFLTAAVGDGIRLWDLRNLRLMCMKWAPAAFCTVLQDTQIRLLKWPSTQQLLSLSQPP.

WD repeat units follow at residues 3-56, 61-100, 111-150, 154-193, 200-236, 291-335, 342-385, 500-540, 544-582, 588-639, 644-685, 691-738, and 752-779; these read TPPE…VWSS, HQLLTLQGHHQLITAVVFGNQIDPLLLCSASEDYIIMWNV, LTPRGTILGSLLQTVLCLRFSLDDRAIAVCAGNKISVMDV, SVLVELKGHQGSVTAVEFCPWQAHTLISVSEDRSFKVWDF, YSSSILTAYPLLNLLINEENQQLVTGSADGQLWIFSL, FPIL…LASF, HFKE…VLEI, NLSR…VFNA, GPPAAFSGHDGAVSTICWSHDKRWLLSTGRDRTLRVWSV, MLLL…RYKP, KPIF…VFDL, AAVL…LWDL, and AFCTVLQDTQIRLLKWPSTQQLLSLSQP.

This Mus musculus (Mouse) protein is WD repeat-containing protein 27 (Wdr27).